Reading from the N-terminus, the 468-residue chain is UDP-glycosyltransferase 89B2 (468 aa).

Residues Ser287, 347-348, 365-373, and 387-390 contribute to the UDP-alpha-D-glucose site; these read WV, HCGWNSVME, and SADQ.

The protein belongs to the UDP-glycosyltransferase family.

In terms of biological role, may glycosylate diterpenes or flavonols in leaves. This is UDP-glycosyltransferase 89B2 from Stevia rebaudiana (Stevia).